Reading from the N-terminus, the 557-residue chain is Putative glutathione-regulated potassium-efflux system protein KefB (557 aa).

10 helical membrane passes run 2-22, 24-44, 56-76, 84-104, 121-141, 146-166, 176-196, 199-219, 237-257, and 260-280; these read LGYL…ISDV, EILH…GLEL, IFGV…GLLM, AAVV…LQLM, VLLF…LLAG, HFDW…LIGG, FIAA…LVLG, LFMD…GVLL, GLLL…GVLY, and LLWV…VLYL. An RCK N-terminal domain is found at 356–475; that stretch reads KPQVIVVGFG…AGVTQFSRET (120 aa).

The protein belongs to the monovalent cation:proton antiporter 2 (CPA2) transporter (TC 2.A.37) family. KefB subfamily. Interacts with the regulatory subunit KefG.

It localises to the cell inner membrane. In terms of biological role, pore-forming subunit of a potassium efflux system that confers protection against electrophiles. Catalyzes K(+)/H(+) antiport. The polypeptide is Putative glutathione-regulated potassium-efflux system protein KefB (Shigella flexneri).